Reading from the N-terminus, the 184-residue chain is Ribosome maturation factor RimM (184 aa).

Positions 106–184 (PGDYYWYQLE…RMIVDWDPEF (79 aa)) constitute a PRC barrel domain.

The protein belongs to the RimM family. As to quaternary structure, binds ribosomal protein uS19.

The protein localises to the cytoplasm. Functionally, an accessory protein needed during the final step in the assembly of 30S ribosomal subunit, possibly for assembly of the head region. Essential for efficient processing of 16S rRNA. May be needed both before and after RbfA during the maturation of 16S rRNA. It has affinity for free ribosomal 30S subunits but not for 70S ribosomes. In Chromohalobacter salexigens (strain ATCC BAA-138 / DSM 3043 / CIP 106854 / NCIMB 13768 / 1H11), this protein is Ribosome maturation factor RimM.